Consider the following 204-residue polypeptide: Inner membrane-spanning protein YciB (204 aa).

Helical transmembrane passes span 3–23, 45–65, 70–90, 107–127, 145–165, and 168–188; these read AEISPLLKFVLELGPLMVFFF, IFIATGLFMIATATALTVSWI, LPIMPLISGIVVFVFGALTLW, LFGVILLGGLFFGQSLLGYVF, WGVFFLFLAVLNEVVWRMFTT, and WVAFKVWGTMPITIIFTMAQM.

This sequence belongs to the YciB family.

It is found in the cell inner membrane. Functionally, plays a role in cell envelope biogenesis, maintenance of cell envelope integrity and membrane homeostasis. The polypeptide is Inner membrane-spanning protein YciB (Agrobacterium fabrum (strain C58 / ATCC 33970) (Agrobacterium tumefaciens (strain C58))).